The chain runs to 163 residues: MTSPTAPFWQTVPLDQMSSEQWESLCDGCGRCCLNKLRDEDTEEVIYTNVACRLLDTHTCRCTDYADRHRKVPDCVTLTPELLAEIDWLPPSCSYRLLRDGFDLPDWHPLRTGNEKGVHSSGASVQDRCISERRAGPLEDHLEDWPGEWPDRSPLCHALKRKG.

The protein belongs to the UPF0260 family.

The sequence is that of UPF0260 protein GOX1406 from Gluconobacter oxydans (strain 621H) (Gluconobacter suboxydans).